The primary structure comprises 192 residues: Ion-translocating oxidoreductase complex subunit B (192 aa).

The tract at residues 1 to 26 is hydrophobic; sequence MNAIWIAVAAVSLLGLAFGAILGYAS. The 60-residue stretch at 32-91 folds into the 4Fe-4S domain; the sequence is EDDPVVEKIDEILPQSQCGQCGYPGCRPYAEAISCNGEKINRCAPGGEAVMLKIAELLNV. [4Fe-4S] cluster-binding residues include C49, C52, C57, C74, C117, C120, C123, C127, C147, C150, C153, and C157. 4Fe-4S ferredoxin-type domains are found at residues 108–137 and 138–167; these read MVAV…GATR and AMHT…LQPV.

Belongs to the 4Fe4S bacterial-type ferredoxin family. RnfB subfamily. As to quaternary structure, the complex is composed of six subunits: RsxA, RsxB, RsxC, RsxD, RsxE and RsxG. The cofactor is [4Fe-4S] cluster.

The protein resides in the cell inner membrane. Functionally, part of a membrane-bound complex that couples electron transfer with translocation of ions across the membrane. Required to maintain the reduced state of SoxR. The chain is Ion-translocating oxidoreductase complex subunit B from Escherichia coli O127:H6 (strain E2348/69 / EPEC).